Reading from the N-terminus, the 195-residue chain is Cysteine/O-acetylserine efflux protein (195 aa).

Topologically, residues 1-7 (MTPTLLS) are periplasmic. The helical transmembrane segment at 8–28 (AFWTYTLITAMTPGPNNILAL) threads the bilayer. Topologically, residues 29 to 46 (SSATSHGFRQSTRVLAGM) are cytoplasmic. Residues 47–67 (SLGFLIVMLLCAGISFSLAVI) traverse the membrane as a helical segment. Residues 68-69 (DP) lie on the Periplasmic side of the membrane. A helical transmembrane segment spans residues 70–90 (AAVHLLSWAGAAYIVWLAWKI). Residues 91–104 (ATSPTKEDGLQAKP) lie on the Cytoplasmic side of the membrane. Residues 105–125 (ISFWASFALQFVNVKIILYGV) form a helical membrane-spanning segment. Residues 126 to 141 (TALSTFVLPQTQALSW) lie on the Periplasmic side of the membrane. A helical membrane pass occupies residues 142 to 162 (VVGVSVLLAMIGTFGNVCWAL). Residues 163–176 (AGHLFQRLFRQYGR) are Cytoplasmic-facing. A helical transmembrane segment spans residues 177-194 (QLNIVLALLLVYCAVRIF). Position 195 (Y195) is a topological domain, periplasmic.

It belongs to the Rht family.

The protein resides in the cell inner membrane. It carries out the reaction O-acetyl-L-serine(in) = O-acetyl-L-serine(out). It catalyses the reaction L-cysteine(in) = L-cysteine(out). Functionally, exporter of O-acetylserine (OAS) and cysteine. In Escherichia coli O9:H4 (strain HS), this protein is Cysteine/O-acetylserine efflux protein (eamB).